A 279-amino-acid chain; its full sequence is Putative hydroxypyruvate isomerase (279 aa).

Residues E155 and E256 each act as proton donor/acceptor in the active site. Residues 260–279 are disordered; sequence GDDPSAQSFSWLPAGARAAR.

It belongs to the hyi family.

The enzyme catalyses 3-hydroxypyruvate = 2-hydroxy-3-oxopropanoate. In terms of biological role, catalyzes the reversible isomerization between hydroxypyruvate and 2-hydroxy-3-oxopropanoate (also termed tartronate semialdehyde). The chain is Putative hydroxypyruvate isomerase from Streptomyces coelicolor (strain ATCC BAA-471 / A3(2) / M145).